The sequence spans 101 residues: Protein mes1 (101 aa).

A compositionally biased stretch (basic and acidic residues) spans 1 to 19; the sequence is MVNTDNKENEPPNMEKAHM. Residues 1-101 are disordered; sequence MVNTDNKENE…RSPNPLLSMR (101 aa).

Interacts with slp1.

The protein localises to the cytoplasm. It localises to the nucleus. Specifically required for meiosis II (MII). Binds to slp1, an activator of the anapahase promoting complex/cyclcosome (APC/C), and counteracts its function in promoting proteolysis of cdc13. By suppressing the degradation of cdc13 at anaphase I this protein may help maintain a sufficient level of cdc2 kinase activity to complete MII. The sequence is that of Protein mes1 (mes1) from Schizosaccharomyces pombe (strain 972 / ATCC 24843) (Fission yeast).